The sequence spans 173 residues: Transcriptional repressor NrdR (173 aa).

The segment at 3 to 34 (CPYCGSLDTQVKDSRPTEDNTAIRRRRVCPDC) is a zinc-finger region. Positions 49–139 (LMVVKRSGRR…VYRNFREARD (91 aa)) constitute an ATP-cone domain.

It belongs to the NrdR family. The cofactor is Zn(2+).

Negatively regulates transcription of bacterial ribonucleotide reductase nrd genes and operons by binding to NrdR-boxes. This Azorhizobium caulinodans (strain ATCC 43989 / DSM 5975 / JCM 20966 / LMG 6465 / NBRC 14845 / NCIMB 13405 / ORS 571) protein is Transcriptional repressor NrdR.